The following is a 229-amino-acid chain: DNA mismatch repair protein MutH (229 aa).

Belongs to the MutH family.

It is found in the cytoplasm. Functionally, sequence-specific endonuclease that cleaves unmethylated GATC sequences. It is involved in DNA mismatch repair. In Escherichia coli O45:K1 (strain S88 / ExPEC), this protein is DNA mismatch repair protein MutH.